The chain runs to 424 residues: Spermatogenesis-associated protein 2-like protein (424 aa).

Disordered stretches follow at residues 233-258 (EDEG…AELA) and 273-300 (TGGR…EEGL). Ser327 is modified (phosphoserine).

This sequence belongs to the SPATA2 family.

This Homo sapiens (Human) protein is Spermatogenesis-associated protein 2-like protein.